The chain runs to 352 residues: B1 bradykinin receptor (352 aa).

The Extracellular portion of the chain corresponds to 1–41; sequence MASWPPLQLQSSNQSQLFPQNATACDNAPEAWDLLHRVLPT. N13 and N21 each carry an N-linked (GlcNAc...) asparagine glycan. The helical transmembrane segment at 42–62 threads the bilayer; sequence FIISICSFGLLGNLFVLLVFL. Residues 63-72 lie on the Cytoplasmic side of the membrane; sequence LPRRRLNVAE. Residues 73–93 form a helical membrane-spanning segment; the sequence is IYLANLAASDLVFVLGLPFWA. Residues 94–110 lie on the Extracellular side of the membrane; the sequence is ENIWNQFNWPFGALLCR. C109 and C188 form a disulfide bridge. Residues 111–131 form a helical membrane-spanning segment; the sequence is VINGIIKANLFISIFLVVAIS. Topologically, residues 132–153 are cytoplasmic; that stretch reads QDRYCVLVHPMASRRRQRRRQA. A helical transmembrane segment spans residues 154–174; sequence RVTCVLIWVVGGLLSIPTFLL. Residues 175–206 lie on the Extracellular side of the membrane; it reads RSIQAVPDLNITACILLLPHEAWHFARIVELN. N-linked (GlcNAc...) asparagine glycosylation occurs at N184. A helical transmembrane segment spans residues 207–227; sequence ILAFLLPLAAIIFFNYHILAS. Over 228-250 the chain is Cytoplasmic; sequence LRGREEVSRTRCGGSKDSKTTAL. A helical membrane pass occupies residues 251-271; the sequence is ILTLVVAFLVCWAPYHFFAFL. Residues 272-294 lie on the Extracellular side of the membrane; the sequence is EFLFQVQAVRGCFWEDFIDLGLQ. A helical membrane pass occupies residues 295 to 315; sequence LANFLAFTNSSLNPVIYVFAG. Residues 316–352 lie on the Cytoplasmic side of the membrane; sequence RLFRTKVWELYKQCTPKSLAPISSSHRKEIFQLFWRN. C329 carries S-palmitoyl cysteine lipidation.

This sequence belongs to the G-protein coupled receptor 1 family. Bradykinin receptor subfamily. BDKRB1 sub-subfamily.

Its subcellular location is the cell membrane. In terms of biological role, this is a receptor for bradykinin. Could be a factor in chronic pain and inflammation. This Macaca fascicularis (Crab-eating macaque) protein is B1 bradykinin receptor (BDKRB1).